Reading from the N-terminus, the 359-residue chain is Dual-specificity RNA methyltransferase RlmN (359 aa).

The active-site Proton acceptor is the Glu98. The Radical SAM core domain maps to Glu104–Arg329. An intrachain disulfide couples Cys111 to Cys340. [4Fe-4S] cluster-binding residues include Cys118, Cys122, and Cys125. S-adenosyl-L-methionine is bound by residues Gly166–Glu167, Ser198, Ser220–His222, and Asn297. Cys340 acts as the S-methylcysteine intermediate in catalysis.

Belongs to the radical SAM superfamily. RlmN family. [4Fe-4S] cluster serves as cofactor.

Its subcellular location is the cytoplasm. The enzyme catalyses adenosine(2503) in 23S rRNA + 2 reduced [2Fe-2S]-[ferredoxin] + 2 S-adenosyl-L-methionine = 2-methyladenosine(2503) in 23S rRNA + 5'-deoxyadenosine + L-methionine + 2 oxidized [2Fe-2S]-[ferredoxin] + S-adenosyl-L-homocysteine. The catalysed reaction is adenosine(37) in tRNA + 2 reduced [2Fe-2S]-[ferredoxin] + 2 S-adenosyl-L-methionine = 2-methyladenosine(37) in tRNA + 5'-deoxyadenosine + L-methionine + 2 oxidized [2Fe-2S]-[ferredoxin] + S-adenosyl-L-homocysteine. Its function is as follows. Specifically methylates position 2 of adenine 2503 in 23S rRNA and position 2 of adenine 37 in tRNAs. m2A2503 modification seems to play a crucial role in the proofreading step occurring at the peptidyl transferase center and thus would serve to optimize ribosomal fidelity. The protein is Dual-specificity RNA methyltransferase RlmN of Halorhodospira halophila (strain DSM 244 / SL1) (Ectothiorhodospira halophila (strain DSM 244 / SL1)).